The following is a 502-amino-acid chain: Glycerol kinase (502 aa).

T14 lines the ADP pocket. ATP-binding residues include T14, T15, and S16. Sn-glycerol 3-phosphate is bound at residue T14. R18 is a binding site for ADP. Residues R84, E85, Y136, and D246 each coordinate sn-glycerol 3-phosphate. Residues R84, E85, Y136, D246, and Q247 each contribute to the glycerol site. Residues T268 and G311 each coordinate ADP. ATP-binding residues include T268, G311, Q315, and G412. The ADP site is built by G412 and N416.

It belongs to the FGGY kinase family. In terms of assembly, homotetramer and homodimer (in equilibrium). Heterodimer with EIIA-Glc. Binds 1 zinc ion per glycerol kinase EIIA-Glc dimer. The zinc ion is important for dimerization.

The enzyme catalyses glycerol + ATP = sn-glycerol 3-phosphate + ADP + H(+). It functions in the pathway polyol metabolism; glycerol degradation via glycerol kinase pathway; sn-glycerol 3-phosphate from glycerol: step 1/1. Activity of this regulatory enzyme is affected by several metabolites. Allosterically and non-competitively inhibited by fructose 1,6-bisphosphate (FBP) and unphosphorylated phosphocarrier protein EIIA-Glc (III-Glc), an integral component of the bacterial phosphotransferase (PTS) system. Key enzyme in the regulation of glycerol uptake and metabolism. Catalyzes the phosphorylation of glycerol to yield sn-glycerol 3-phosphate. This is Glycerol kinase from Shigella flexneri.